Consider the following 344-residue polypeptide: UDP-galactose/UDP-glucose transporter 5B (344 aa).

Transmembrane regions (helical) follow at residues 16-36 (LWKG…YGVL), 56-76 (LFLV…ALLA), 115-135 (VQTL…TLIM), 142-162 (FDYL…LFPA), 176-196 (TVWG…TSTF), 220-240 (CVLS…VDFV), 246-266 (CLLD…FISY), and 292-312 (CIWF…IVFG). The tract at residues 324 to 344 (KNSQTQPPPPELPQYEKVESS) is disordered.

This sequence belongs to the nucleotide-sugar transporter family. UDP-galactose:UMP antiporter (TC 2.A.7.11) subfamily.

Its subcellular location is the membrane. Sugar transporter involved in the transport of nucleotide-sugars from cytoplasm into the Golgi and/or the endoplasmic reticulum. This chain is UDP-galactose/UDP-glucose transporter 5B, found in Arabidopsis thaliana (Mouse-ear cress).